The sequence spans 285 residues: Acetylglutamate kinase (285 aa).

Substrate contacts are provided by residues 55 to 56 (GG), arginine 77, and asparagine 171.

It belongs to the acetylglutamate kinase family. ArgB subfamily.

The protein resides in the cytoplasm. The enzyme catalyses N-acetyl-L-glutamate + ATP = N-acetyl-L-glutamyl 5-phosphate + ADP. It functions in the pathway amino-acid biosynthesis; L-arginine biosynthesis; N(2)-acetyl-L-ornithine from L-glutamate: step 2/4. Functionally, catalyzes the ATP-dependent phosphorylation of N-acetyl-L-glutamate. The sequence is that of Acetylglutamate kinase from Chlorobaculum tepidum (strain ATCC 49652 / DSM 12025 / NBRC 103806 / TLS) (Chlorobium tepidum).